The following is a 161-amino-acid chain: Anaerobic nitrite reductase Hb2 (161 aa).

Positions 8 to 157 constitute a Globin domain; that stretch reads GFSEEQEALV…LVDAIKSEMK (150 aa). The Homodimerization motif lies at 41–45; it reads EIAPS. Residues S51, K65, H69, K99, T103, and H104 each coordinate heme b. The Homodimerization signature appears at 111-123; the sequence is NEHFEVTKFALLE.

This sequence belongs to the plant globin family. In terms of assembly, homodimer. The cofactor is heme b. In terms of tissue distribution, predominantly expressed in roots, cotyledons, stems and nodules (confined to some cells associated with the nitrogen-fixing Bradyrhizobium symbiont), and, to a lower extent, in flowers, young leaves, pods and seeds.

The protein resides in the cytoplasm. The protein localises to the nucleus. The enzyme catalyses Fe(III)-heme b-[protein] + nitric oxide + H2O = Fe(II)-heme b-[protein] + nitrite + 2 H(+). Its function is as follows. Phytoglobin that reduces nitrite to nitric oxide (NO) under anoxic conditions (e.g. during flooding or in waterlogged soil) and upon root nodulation. Required for general plant development and during nodulation, especially for the onset of symbiosis. Monitors nitric oxide (NO) levels during early phase of the nitrogen-fixing symbiosis and buffers oxygen in functioning nodules. May not function as an oxygen storage or transport protein. Has an unusually high affinity for O(2) through a hexacoordinate heme iron because of a very low dissociation constant. Involved in water stress tolerance. This is Anaerobic nitrite reductase Hb2 from Glycine max (Soybean).